We begin with the raw amino-acid sequence, 269 residues long: Zinc transporter ZupT (269 aa).

8 helical membrane-spanning segments follow: residues 11–31, 40–60, 80–100, 125–145, 158–178, 187–207, 217–237, and 249–269; these read IALA…LLVL, LLAF…LSEI, YGTL…HFIP, ALLT…ATFF, AFAI…PVYF, FSAS…GYWL, FGWV…DELL, and TVYG…LFKW. Asparagine 136 and glutamate 139 together coordinate Fe(2+). 2 residues coordinate Zn(2+): glutamate 139 and histidine 164. Asparagine 165, glutamate 168, and glutamate 197 together coordinate Fe(2+). Residue glutamate 168 coordinates Zn(2+).

Belongs to the ZIP transporter (TC 2.A.5) family. ZupT subfamily.

Its subcellular location is the cell inner membrane. The enzyme catalyses Zn(2+)(in) = Zn(2+)(out). In terms of biological role, mediates zinc uptake. May also transport other divalent cations. The polypeptide is Zinc transporter ZupT (Stenotrophomonas maltophilia (strain K279a)).